The primary structure comprises 492 residues: MNTYELISSLKIKQQIGKLPNTISSISHNSRQVDDNSLFICISGFTVDGHNFVAEAVENGATCIVAEREVNLDTNKATLIIVPDTNKAIATLAATFYKHPSHNLTIYGVTGTNGKTTVTTIINHLLTDNELSTALIGTNGFQINKDIYSSSNNTTSDVLTNQHMLYEAKNQGVTHVAMEVSSHGLEQGRLWGIDFTVATFTNLSHEHLDYHGSMEEYAATKVQLFSSLAIQPNKQKIAVLNRDDNWYEYFQKRTPVQIVSYGIYEQADFRATAIKYYKDRTSFELLTPEGSFQVQTKLMGEFNVYNVLAAIASVYVKESIPLTDLVKSIEGTPTPPGRMEKLESSGNRHIYIDYAHTPDALTKAINSLLPFKQNKLIVVVGTGGDRDKSIRPLLAKAASVADYVILTINDPRHEDPNNILQDLENGMLHHQYTCLENRKEAIREAINYSSPNDIILIAGKGKEPYQIIKNKKVAHNDATIALECSNELFPNI.

S30 serves as a coordination point for UDP-N-acetyl-alpha-D-muramoyl-L-alanyl-D-glutamate. Residue 111–117 (GTNGKTT) coordinates ATP. Residues 154–155 (TT), S181, Q187, and R189 contribute to the UDP-N-acetyl-alpha-D-muramoyl-L-alanyl-D-glutamate site. K221 is subject to N6-carboxylysine.

Belongs to the MurCDEF family. MurE subfamily. Post-translationally, carboxylation is probably crucial for Mg(2+) binding and, consequently, for the gamma-phosphate positioning of ATP.

The protein localises to the cytoplasm. Its pathway is cell wall biogenesis; peptidoglycan biosynthesis. In terms of biological role, catalyzes the addition of an amino acid to the nucleotide precursor UDP-N-acetylmuramoyl-L-alanyl-D-glutamate (UMAG) in the biosynthesis of bacterial cell-wall peptidoglycan. In Oceanobacillus iheyensis (strain DSM 14371 / CIP 107618 / JCM 11309 / KCTC 3954 / HTE831), this protein is UDP-N-acetylmuramyl-tripeptide synthetase 2.